The chain runs to 623 residues: Interferon-induced GTP-binding protein Mx3 (623 aa).

The region spanning 31–304 (DLALPAIAVI…LVHHIEKSLP (274 aa)) is the Dynamin-type G domain. Residues 41–48 (GDQSSGKS) form a G1 motif region. 41–48 (GDQSSGKS) lines the GTP pocket. The segment at 66–68 (VTR) is G2 motif. The G3 motif stretch occupies residues 142–145 (DLPG). GTP is bound by residues 142–146 (DLPGI) and 211–214 (TKPD). Residues 211-214 (TKPD) form a G4 motif region. The G5 motif stretch occupies residues 243–246 (KCRG). Residues 537-623 (LQEMMLHLKS…MKARSYLVEF (87 aa)) enclose the GED domain.

This sequence belongs to the TRAFAC class dynamin-like GTPase superfamily. Dynamin/Fzo/YdjA family.

It localises to the cytoplasm. Its function is as follows. Does not inhibit strain RB-1 of the fish pathogen, infectious hematopoietic necrosis virus (IHNV). This is Interferon-induced GTP-binding protein Mx3 from Oncorhynchus mykiss (Rainbow trout).